A 487-amino-acid chain; its full sequence is Glutamyl-tRNA(Gln) amidotransferase subunit A (487 aa).

Catalysis depends on charge relay system residues Lys74 and Ser149. Ser173 acts as the Acyl-ester intermediate in catalysis.

The protein belongs to the amidase family. GatA subfamily. In terms of assembly, heterotrimer of A, B and C subunits.

The catalysed reaction is L-glutamyl-tRNA(Gln) + L-glutamine + ATP + H2O = L-glutaminyl-tRNA(Gln) + L-glutamate + ADP + phosphate + H(+). Its function is as follows. Allows the formation of correctly charged Gln-tRNA(Gln) through the transamidation of misacylated Glu-tRNA(Gln) in organisms which lack glutaminyl-tRNA synthetase. The reaction takes place in the presence of glutamine and ATP through an activated gamma-phospho-Glu-tRNA(Gln). This chain is Glutamyl-tRNA(Gln) amidotransferase subunit A, found in Synechococcus sp. (strain CC9311).